The chain runs to 347 residues: NADH-ubiquinone oxidoreductase chain 2 (347 aa).

Transmembrane regions (helical) follow at residues 13 to 33 (IFAG…WVGL), 56 to 76 (AIKY…AILF), 96 to 116 (LMIM…FWVP), 123 to 143 (PLTS…SIMY), 149 to 169 (LNVS…SWGG), 178 to 198 (ILAY…PYNP), 201 to 221 (TILN…LLNL), 247 to 267 (TLLS…WAII), 274 to 294 (NSLI…YFYL), and 326 to 346 (LPTL…MLMI).

This sequence belongs to the complex I subunit 2 family. As to quaternary structure, core subunit of respiratory chain NADH dehydrogenase (Complex I) which is composed of 45 different subunits. Interacts with TMEM242.

The protein localises to the mitochondrion inner membrane. The catalysed reaction is a ubiquinone + NADH + 5 H(+)(in) = a ubiquinol + NAD(+) + 4 H(+)(out). In terms of biological role, core subunit of the mitochondrial membrane respiratory chain NADH dehydrogenase (Complex I) which catalyzes electron transfer from NADH through the respiratory chain, using ubiquinone as an electron acceptor. Essential for the catalytic activity and assembly of complex I. This Homo sapiens (Human) protein is NADH-ubiquinone oxidoreductase chain 2.